A 61-amino-acid polypeptide reads, in one-letter code: Small ribosomal subunit protein uS14 (61 aa).

Zn(2+) is bound by residues cysteine 24, cysteine 27, cysteine 40, and cysteine 43.

Belongs to the universal ribosomal protein uS14 family. Zinc-binding uS14 subfamily. As to quaternary structure, part of the 30S ribosomal subunit. Contacts proteins S3 and S10. The cofactor is Zn(2+).

Functionally, binds 16S rRNA, required for the assembly of 30S particles and may also be responsible for determining the conformation of the 16S rRNA at the A site. This Moorella thermoacetica (strain ATCC 39073 / JCM 9320) protein is Small ribosomal subunit protein uS14.